Consider the following 308-residue polypeptide: Probable GTP 3',8-cyclase (308 aa).

The Radical SAM core domain occupies 4–224; that stretch reads RFGRPLEDLR…QIRKKHFRPR (221 aa). Arginine 13 contributes to the GTP binding site. Residues cysteine 20, cysteine 24, and cysteine 27 each contribute to the [4Fe-4S] cluster site. Residue lysine 60 participates in GTP binding. Glycine 64 is a binding site for S-adenosyl-L-methionine. GTP is bound at residue threonine 90. Serine 114 is an S-adenosyl-L-methionine binding site. Lysine 151 is a GTP binding site. [4Fe-4S] cluster is bound by residues cysteine 245 and cysteine 248. 250 to 252 contributes to the GTP binding site; that stretch reads RIR. Cysteine 262 is a [4Fe-4S] cluster binding site.

This sequence belongs to the radical SAM superfamily. MoaA family. [4Fe-4S] cluster is required as a cofactor.

The catalysed reaction is GTP + AH2 + S-adenosyl-L-methionine = (8S)-3',8-cyclo-7,8-dihydroguanosine 5'-triphosphate + 5'-deoxyadenosine + L-methionine + A + H(+). It functions in the pathway cofactor biosynthesis; molybdopterin biosynthesis. Its function is as follows. Catalyzes the cyclization of GTP to (8S)-3',8-cyclo-7,8-dihydroguanosine 5'-triphosphate. The polypeptide is Probable GTP 3',8-cyclase (Saccharolobus islandicus (strain M.16.27) (Sulfolobus islandicus)).